The chain runs to 327 residues: Trypsin-like protease try-5 (327 aa).

A signal peptide spans M1–L21. The 285-residue stretch at A43–A327 folds into the Peptidase S1 domain. C73 and C89 are disulfide-bonded. Catalysis depends on charge relay system residues H88 and D173. A glycan (N-linked (GlcNAc...) asparagine) is linked at N207. 2 disulfide bridges follow: C242–C256 and C266–C296. The active-site Charge relay system is S270.

Belongs to the peptidase S1 family. In terms of tissue distribution, specifically expressed in the male gonad including the seminal vesicle, the valve region and the vas deferens.

The protein resides in the secreted. It localises to the cytoplasmic vesicle. Its subcellular location is the secretory vesicle lumen. With respect to regulation, in the male gonad, probably maintained inactive by swm-1. Functionally, serine protease which, in males, acts as a promoting signal during mating to activate sperm. This Caenorhabditis elegans protein is Trypsin-like protease try-5.